A 314-amino-acid polypeptide reads, in one-letter code: Ribosomal protein L11 methyltransferase (314 aa).

Residues Thr-161, Gly-182, Asp-204, and Asn-248 each contribute to the S-adenosyl-L-methionine site.

Belongs to the methyltransferase superfamily. PrmA family.

The protein localises to the cytoplasm. The catalysed reaction is L-lysyl-[protein] + 3 S-adenosyl-L-methionine = N(6),N(6),N(6)-trimethyl-L-lysyl-[protein] + 3 S-adenosyl-L-homocysteine + 3 H(+). Functionally, methylates ribosomal protein L11. The sequence is that of Ribosomal protein L11 methyltransferase from Listeria monocytogenes serotype 1/2a (strain 10403S).